A 74-amino-acid polypeptide reads, in one-letter code: Protein SlyX homolog (74 aa).

The tract at residues 52–74 (LKQMQENQSTDSDPADEPPPPHY) is disordered.

The protein belongs to the SlyX family.

In Idiomarina loihiensis (strain ATCC BAA-735 / DSM 15497 / L2-TR), this protein is Protein SlyX homolog.